Consider the following 107-residue polypeptide: CLAVATA3/ESR (CLE)-related protein 10 (107 aa).

The signal sequence occupies residues 1 to 23 (MKTNRNRPINILIVFFLLTTARA). Residues Asn-27 and Asn-30 are each glycosylated (N-linked (GlcNAc...) asparagine). Residues 73-107 (SRQPLFSPPPPPTEIDQRYGVEKRLVPSGPNPLHN) form a disordered region. The span at 87 to 97 (IDQRYGVEKRL) shows a compositional bias: basic and acidic residues. Hydroxyproline occurs at positions 99 and 102. Residue Pro-102 is glycosylated (O-linked (Ara...) hydroxyproline).

Belongs to the CLV3/ESR signal peptide family. Post-translationally, the O-glycosylation (arabinosylation) of the hydroxyproline Pro-102 enhances binding affinity of the CLE10p peptide for its receptor. In terms of tissue distribution, expressed in stems, apex, leaves, flowers, siliques and pollen.

It is found in the secreted. The protein resides in the extracellular space. Extracellular signal peptide that regulates cell fate. Represses root apical meristem maintenance. Regulates the transition of protophloem cells from proliferation to differentiation, thus impinging on postembryonic growth capacity of the root meristem; this signaling pathway requires CRN and CLV2. The sequence is that of CLAVATA3/ESR (CLE)-related protein 10 from Arabidopsis thaliana (Mouse-ear cress).